The chain runs to 135 residues: ATP synthase epsilon chain (135 aa).

The protein belongs to the ATPase epsilon chain family. As to quaternary structure, F-type ATPases have 2 components, CF(1) - the catalytic core - and CF(0) - the membrane proton channel. CF(1) has five subunits: alpha(3), beta(3), gamma(1), delta(1), epsilon(1). CF(0) has three main subunits: a, b and c.

Its subcellular location is the cell inner membrane. Its function is as follows. Produces ATP from ADP in the presence of a proton gradient across the membrane. This Brucella suis (strain ATCC 23445 / NCTC 10510) protein is ATP synthase epsilon chain.